Reading from the N-terminus, the 330-residue chain is Phosphate acyltransferase (330 aa).

This sequence belongs to the PlsX family. As to quaternary structure, homodimer. Probably interacts with PlsY.

Its subcellular location is the cytoplasm. The catalysed reaction is a fatty acyl-[ACP] + phosphate = an acyl phosphate + holo-[ACP]. It functions in the pathway lipid metabolism; phospholipid metabolism. Functionally, catalyzes the reversible formation of acyl-phosphate (acyl-PO(4)) from acyl-[acyl-carrier-protein] (acyl-ACP). This enzyme utilizes acyl-ACP as fatty acyl donor, but not acyl-CoA. The chain is Phosphate acyltransferase from Streptococcus pneumoniae (strain ATCC 700669 / Spain 23F-1).